A 245-amino-acid polypeptide reads, in one-letter code: Phycocyanobilin:ferredoxin oxidoreductase (245 aa).

This sequence belongs to the HY2 family.

The enzyme catalyses (2R,3Z)-phycocyanobilin + 4 oxidized [2Fe-2S]-[ferredoxin] = biliverdin IXalpha + 4 reduced [2Fe-2S]-[ferredoxin] + 4 H(+). Its function is as follows. Catalyzes the four-electron reduction of biliverdin IX-alpha (2-electron reduction at both the A and D rings); the reaction proceeds via an isolatable 2-electron intermediate, 181,182-dihydrobiliverdin. In Trichodesmium erythraeum (strain IMS101), this protein is Phycocyanobilin:ferredoxin oxidoreductase.